The following is a 44-amino-acid chain: Photosystem I reaction center subunit IX (44 aa).

The chain crosses the membrane as a helical span at residues 7-27 (YLSVAPVISTLWFGSLAGLLI).

This sequence belongs to the PsaJ family.

It localises to the plastid. The protein localises to the chloroplast thylakoid membrane. Its function is as follows. May help in the organization of the PsaE and PsaF subunits. This is Photosystem I reaction center subunit IX from Populus alba (White poplar).